A 384-amino-acid polypeptide reads, in one-letter code: tRNA-specific 2-thiouridylase MnmA (384 aa).

Residues 29–36 (AMSGGVDS) and leucine 55 each bind ATP. The active-site Nucleophile is cysteine 123. Residues cysteine 123 and cysteine 220 are joined by a disulfide bond. Glycine 147 contributes to the ATP binding site. An interaction with tRNA region spans residues 169 to 171 (RDQ). Catalysis depends on cysteine 220, which acts as the Cysteine persulfide intermediate.

This sequence belongs to the MnmA/TRMU family.

It localises to the cytoplasm. It catalyses the reaction S-sulfanyl-L-cysteinyl-[protein] + uridine(34) in tRNA + AH2 + ATP = 2-thiouridine(34) in tRNA + L-cysteinyl-[protein] + A + AMP + diphosphate + H(+). Its function is as follows. Catalyzes the 2-thiolation of uridine at the wobble position (U34) of tRNA, leading to the formation of s(2)U34. This chain is tRNA-specific 2-thiouridylase MnmA, found in Dinoroseobacter shibae (strain DSM 16493 / NCIMB 14021 / DFL 12).